Here is a 310-residue protein sequence, read N- to C-terminus: MNAPKTLVIASRESALAMWQAQYIQGRLQTLYPETEVTILGMTTTGDQILDSPLARIGGKGLFVKELEQALADGRADLAVHSMKDVPMHLPPGFALAAISERDDPRDAFVSNDYPNLASLPAGSIVGTSSLRRQSQLQARFPGLKVESLRGNLQTRLRKLDEGQYAAIILAAAGLKRLGLASRIRESIDPDNSIPAVGQGALGIEINAERLDLLKVLAPLNHPETAACVEAERGMSRALAGSCQVPLGAFAQQHGDTLQMTGFVASIDGKEFLRESVQGPAEQPEALGQALAAKLVALGADRILAALPHE.

S-(dipyrrolylmethanemethyl)cysteine is present on C243.

This sequence belongs to the HMBS family. In terms of assembly, monomer. Requires dipyrromethane as cofactor.

The enzyme catalyses 4 porphobilinogen + H2O = hydroxymethylbilane + 4 NH4(+). Its pathway is porphyrin-containing compound metabolism; protoporphyrin-IX biosynthesis; coproporphyrinogen-III from 5-aminolevulinate: step 2/4. In terms of biological role, tetrapolymerization of the monopyrrole PBG into the hydroxymethylbilane pre-uroporphyrinogen in several discrete steps. The protein is Porphobilinogen deaminase of Methylobacillus flagellatus (strain ATCC 51484 / DSM 6875 / VKM B-1610 / KT).